A 217-amino-acid polypeptide reads, in one-letter code: MSEAVKNLVNNDLADVMFNRHSVRQFDPNVKIGRDELQKMIAEAATAPSACNLQSWHFVVVDTPEAKAKFKQAVMKFNYPQVDSASAIVFIAGDTQSHYVYRDVWNKVYEDGNITKERLDQILGTFLPLYENATPDFLKFDATIDCSVVGMQLLLVARAHGYDANAFSGIDFEKMIPTLGLDPKRYVPVMGIAIGKAAQEPLHTTRYDAKTQTDFLA.

Residues arginine 20, serine 22, and arginine 24 each contribute to the FMN site. Cysteine 51 lines the 10-oxooctadecanoate pocket. Asparagine 78 and glutamine 81 together coordinate FMN. Residue arginine 118 participates in 10-oxooctadecanoate binding. Positions 165, 168, 169, and 206 each coordinate FMN.

It belongs to the nitroreductase family. Homodimer. FMN is required as a cofactor.

The enzyme catalyses 10-oxo-(11E)-octadecenoate + NADH + H(+) = 10-oxooctadecanoate + NAD(+). It participates in lipid metabolism; fatty acid metabolism. Its function is as follows. Is involved in a saturation metabolic pathway of polyunsaturated fatty acids, that detoxifies unsaturated fatty acids and generates hydroxy fatty acids, oxo fatty acids, conjugated fatty acids such as conjugated linoleic acids (CLAs), and partially saturated trans-fatty acids as intermediates. CLA-ER catalyzes the saturation of the carbon-carbon double bond in 10-oxo-(11E)-octadecenoate to produce 10-oxooctadecanoate, during linoleate metabolism. As part of the gut microbiome, this enzyme modifies host fatty acid composition and is expected to improve human health by altering lipid metabolism related to the onset of metabolic syndrome. This chain is CLA biosynthesis enone reductase, found in Lactiplantibacillus plantarum (Lactobacillus plantarum).